Consider the following 317-residue polypeptide: Ciliary microtubule inner protein 2A (317 aa).

A disordered region spans residues 131–153 (TPDTPHPPCPPGRKGDSRDLGHP).

Belongs to the CIMIP2 family. In terms of assembly, microtubule inner protein component of sperm flagellar doublet microtubules.

The protein localises to the cytoplasm. It is found in the cytoskeleton. Its subcellular location is the flagellum axoneme. Microtubule inner protein (MIP) part of the dynein-decorated doublet microtubules (DMTs) in flagellum axoneme. Binds to the intra-tubulin interfaces. The polypeptide is Ciliary microtubule inner protein 2A (Homo sapiens (Human)).